The sequence spans 396 residues: CCA-adding enzyme (396 aa).

Gly-32 and Arg-35 together coordinate ATP. Residues Gly-32 and Arg-35 each contribute to the CTP site. Positions 45 and 47 each coordinate Mg(2+). Residues Arg-116, Asp-159, Arg-162, Arg-165, and Arg-168 each contribute to the ATP site. The CTP site is built by Arg-116, Asp-159, Arg-162, Arg-165, and Arg-168.

It belongs to the tRNA nucleotidyltransferase/poly(A) polymerase family. Bacterial CCA-adding enzyme type 3 subfamily. Homodimer. Mg(2+) is required as a cofactor.

The enzyme catalyses a tRNA precursor + 2 CTP + ATP = a tRNA with a 3' CCA end + 3 diphosphate. It catalyses the reaction a tRNA with a 3' CCA end + 2 CTP + ATP = a tRNA with a 3' CCACCA end + 3 diphosphate. In terms of biological role, catalyzes the addition and repair of the essential 3'-terminal CCA sequence in tRNAs without using a nucleic acid template. Adds these three nucleotides in the order of C, C, and A to the tRNA nucleotide-73, using CTP and ATP as substrates and producing inorganic pyrophosphate. tRNA 3'-terminal CCA addition is required both for tRNA processing and repair. Also involved in tRNA surveillance by mediating tandem CCA addition to generate a CCACCA at the 3' terminus of unstable tRNAs. While stable tRNAs receive only 3'-terminal CCA, unstable tRNAs are marked with CCACCA and rapidly degraded. The sequence is that of CCA-adding enzyme from Lactobacillus delbrueckii subsp. bulgaricus (strain ATCC 11842 / DSM 20081 / BCRC 10696 / JCM 1002 / NBRC 13953 / NCIMB 11778 / NCTC 12712 / WDCM 00102 / Lb 14).